A 121-amino-acid chain; its full sequence is Small ribosomal subunit protein uS13 (121 aa).

Positions 93–121 (KGLPLRGQKTKTNARTRKGPKKTIANKKK) are disordered.

The protein belongs to the universal ribosomal protein uS13 family. In terms of assembly, part of the 30S ribosomal subunit. Forms a loose heterodimer with protein S19. Forms two bridges to the 50S subunit in the 70S ribosome.

Its function is as follows. Located at the top of the head of the 30S subunit, it contacts several helices of the 16S rRNA. In the 70S ribosome it contacts the 23S rRNA (bridge B1a) and protein L5 of the 50S subunit (bridge B1b), connecting the 2 subunits; these bridges are implicated in subunit movement. Contacts the tRNAs in the A and P-sites. This is Small ribosomal subunit protein uS13 from Clostridium perfringens (strain ATCC 13124 / DSM 756 / JCM 1290 / NCIMB 6125 / NCTC 8237 / Type A).